A 364-amino-acid polypeptide reads, in one-letter code: Leucine-rich repeat-containing protein 19 (364 aa).

The first 20 residues, 1–20 (MKVTRFMFWLFSMLLPSVKS), serve as a signal peptide directing secretion. Residues 21–264 (QASETEVPCN…SEHEPLGKSW (244 aa)) are Extracellular-facing. Asn-30, Asn-35, Asn-46, and Asn-88 each carry an N-linked (GlcNAc...) asparagine glycan. 6 LRR repeats span residues 44-69 (STNVTILDLSYNRITLNAADSRVLQM), 70-93 (YSLLTELYLMENNIIALYNSSFRN), 94-117 (LLNLEILNICGNSISVIQQGSFVG), 118-141 (LNELKQLFLCQNKILQLNPDTFVP), 143-163 (NNLKVLNLQGNLIRLFDAPQL), and 164-190 (PHLEILTLDGNPWNCTCGLLELHNWLN). The 52-residue stretch at 174–225 (NPWNCTCGLLELHNWLNTSNVTLENENMTMCSYPDELKHDSIKSAPFTTECH) folds into the LRRCT domain. Asn-177, Asn-190, Asn-193, Asn-200, Asn-241, Asn-245, and Asn-250 each carry an N-linked (GlcNAc...) asparagine glycan. Residues 265 to 285 (AFLVGVVATVLLTSLLIFIAI) form a helical membrane-spanning segment. Over 286–364 (KCPVWYNILL…IDINEVHEEK (79 aa)) the chain is Cytoplasmic.

In terms of assembly, interacts with TRAF2 and TRAF6. Strongly expressed in kidney, also expressed in spleen, intestine and colon. Highly expressed in epithelial cells. In kidney, mainly expressed in renal collecting duct epithelial cells.

It is found in the membrane. With respect to regulation, activated by TLR ligands such as LPS, bacterial DNA and peptidoglycan. Functionally, pathogen-recognition receptor which mediates the activation of TRAF2- and TRAF6 NF-kappa-B signaling pathways and induces the expression of pro-inflammatory cytokines. In kidney, prevents infection by uropathogenic bacteria by inducing the production of cytokines, chemokines and antimicrobial substances. In gut, involved in host-microbiota interactions, plays a critical role in promoting the recruitment of immune cells and intestinal inflammation. This chain is Leucine-rich repeat-containing protein 19, found in Mus musculus (Mouse).